Here is a 1003-residue protein sequence, read N- to C-terminus: Cytosolic carboxypeptidase 3 (1003 aa).

The interval 1–23 is disordered; that stretch reads MSEDSEKEDYSDRTISDEDESDE. In terms of domain architecture, Peptidase M14 spans 299–570; sequence YPYTYTNLQE…HFCDSLLDYC (272 aa). The Zn(2+) site is built by H364, E367, and H460. E534 functions as the Proton donor/acceptor in the catalytic mechanism. Disordered stretches follow at residues 642 to 662 and 911 to 1003; these read KQLKTKKERNSTIERHQNIRE and KSSE…QRDT. A compositionally biased stretch (basic and acidic residues) spans 649–662; that stretch reads ERNSTIERHQNIRE. Residues 922–934 are compositionally biased toward basic residues; that stretch reads PKKRRKYSRVKAT. Residues 963-976 are compositionally biased toward polar residues; sequence AEGSSQQGTMQTAP.

It belongs to the peptidase M14 family. Requires Zn(2+) as cofactor.

The protein resides in the cytoplasm. Its subcellular location is the cytosol. It catalyses the reaction (L-glutamyl)(n+1)-gamma-L-glutamyl-L-glutamyl-[protein] + H2O = (L-glutamyl)(n)-gamma-L-glutamyl-L-glutamyl-[protein] + L-glutamate. Functionally, metallocarboxypeptidase that mediates deglutamylation of tubulin and non-tubulin target proteins. Catalyzes the removal of polyglutamate side chains present on the gamma-carboxyl group of glutamate residues within the C-terminal tail of tubulin protein. Specifically cleaves tubulin long-side-chains, while it is not able to remove the branching point glutamate. Also catalyzes the removal of polyglutamate residues from the carboxy-terminus of non-tubulin proteins such as MYLK. May catalyze the hydrolysis of aspartate from the carboxy-terminus of target proteins. Does not show detyrosinase or deglycylase activities from the carboxy-terminus of target proteins. The protein is Cytosolic carboxypeptidase 3 (AGBL3) of Bos taurus (Bovine).